A 545-amino-acid chain; its full sequence is Chaperonin GroEL (545 aa).

ATP is bound by residues 29–32 (TMGP), Lys-50, 86–90 (DGTTT), Gly-414, 477–479 (NAA), and Asp-493.

It belongs to the chaperonin (HSP60) family. In terms of assembly, forms a cylinder of 14 subunits composed of two heptameric rings stacked back-to-back. Interacts with the co-chaperonin GroES.

The protein localises to the cytoplasm. The enzyme catalyses ATP + H2O + a folded polypeptide = ADP + phosphate + an unfolded polypeptide.. Together with its co-chaperonin GroES, plays an essential role in assisting protein folding. The GroEL-GroES system forms a nano-cage that allows encapsulation of the non-native substrate proteins and provides a physical environment optimized to promote and accelerate protein folding. The polypeptide is Chaperonin GroEL (Campylobacter fetus subsp. fetus (strain 82-40)).